The sequence spans 1187 residues: DNA-directed RNA polymerase subunit beta (1187 aa).

The disordered stretch occupies residues 1150–1187; that stretch reads KDEDDDPASSADDLGFNIGARPDAAAKEDQKAEEPEYQ. The span at 1173 to 1187 shows a compositional bias: basic and acidic residues; that stretch reads AAAKEDQKAEEPEYQ.

The protein belongs to the RNA polymerase beta chain family. In terms of assembly, the RNAP catalytic core consists of 2 alpha, 1 beta, 1 beta' and 1 omega subunit. When a sigma factor is associated with the core the holoenzyme is formed, which can initiate transcription.

It catalyses the reaction RNA(n) + a ribonucleoside 5'-triphosphate = RNA(n+1) + diphosphate. DNA-dependent RNA polymerase catalyzes the transcription of DNA into RNA using the four ribonucleoside triphosphates as substrates. This is DNA-directed RNA polymerase subunit beta from Bifidobacterium longum subsp. infantis (strain ATCC 15697 / DSM 20088 / JCM 1222 / NCTC 11817 / S12).